A 303-amino-acid chain; its full sequence is Putative S-adenosyl-L-methionine-dependent methyltransferase ML2020 (303 aa).

S-adenosyl-L-methionine-binding positions include aspartate 130 and aspartate 159–leucine 160.

The protein belongs to the UPF0677 family.

Exhibits S-adenosyl-L-methionine-dependent methyltransferase activity. This is Putative S-adenosyl-L-methionine-dependent methyltransferase ML2020 from Mycobacterium leprae (strain TN).